The primary structure comprises 229 residues: MSKNSVIIVAAGKGKRMNSSISKQFLQIKNKPILYYTLNKFSTHESIDEIVLVTLEDKIEVCSEIIDKYSINKVSKIVPGGKERQDSVYNGLKAVSKDCEVVLIHDAARPFVTSDIIENGIRYANQYGAAACGIIPKDTIKIKNEKGFAIDTPNREDLFIAQTPQCFNYNIILDCHEKLKKHNKKVTDDTMVLEDYGKSVYLYEGSYSNIKITTPEDLILGEQILEKLT.

Belongs to the IspD/TarI cytidylyltransferase family. IspD subfamily.

It carries out the reaction 2-C-methyl-D-erythritol 4-phosphate + CTP + H(+) = 4-CDP-2-C-methyl-D-erythritol + diphosphate. It functions in the pathway isoprenoid biosynthesis; isopentenyl diphosphate biosynthesis via DXP pathway; isopentenyl diphosphate from 1-deoxy-D-xylulose 5-phosphate: step 2/6. Its function is as follows. Catalyzes the formation of 4-diphosphocytidyl-2-C-methyl-D-erythritol from CTP and 2-C-methyl-D-erythritol 4-phosphate (MEP). This Clostridium botulinum (strain Loch Maree / Type A3) protein is 2-C-methyl-D-erythritol 4-phosphate cytidylyltransferase.